A 355-amino-acid chain; its full sequence is N-acylethanolamine-hydrolyzing acid amidase (355 aa).

A signal peptide spans 1-17 (MLLLQIILLLLPVICSA). Catalysis depends on cysteine 122, which acts as the Nucleophile. N-linked (GlcNAc...) asparagine glycans are attached at residues asparagine 150, asparagine 160, and asparagine 328.

It belongs to the acid ceramidase family. As to quaternary structure, heterodimer of an alpha and a beta subunit, produced by autocatalytic cleavage. N-glycosylated. Post-translationally, autoproteolytic cleavage at pH 4.5 gives rise to the alpha and beta subunit. Cleavage gives rise to a conformation change that activates the enzyme. The same catalytic Cys residue mediates the autoproteolytic cleavage and subsequent hydrolysis of lipid substrates.

The protein localises to the lysosome. It localises to the membrane. It carries out the reaction N-hexadecanoylethanolamine + H2O = ethanolamine + hexadecanoate. The catalysed reaction is an N-(long-chain fatty acyl)ethanolamine + H2O = a long-chain fatty acid + ethanolamine. It functions in the pathway lipid metabolism; fatty acid metabolism. Functionally, degrades bioactive fatty acid amides, such as N-palmitoylethanolamine, to ethanolamine and free fatty acids. The protein is N-acylethanolamine-hydrolyzing acid amidase of Caenorhabditis elegans.